Reading from the N-terminus, the 254-residue chain is D-aminoacyl-tRNA deacylase (254 aa).

The interval 61–85 is disordered; the sequence is KPTLTVHTPGNLTEDNSRGGNSEEI. Residues 65–84 show a composition bias toward polar residues; the sequence is TVHTPGNLTEDNSRGGNSEE.

It belongs to the DtdA deacylase family. In terms of assembly, monomer. The cofactor is Zn(2+).

It carries out the reaction a D-aminoacyl-tRNA + H2O = a tRNA + a D-alpha-amino acid + H(+). The enzyme catalyses glycyl-tRNA(Ala) + H2O = tRNA(Ala) + glycine + H(+). Functionally, D-aminoacyl-tRNA deacylase with broad substrate specificity. By recycling D-aminoacyl-tRNA to D-amino acids and free tRNA molecules, this enzyme counteracts the toxicity associated with the formation of D-aminoacyl-tRNA entities in vivo. The chain is D-aminoacyl-tRNA deacylase from Methanococcus maripaludis (strain C5 / ATCC BAA-1333).